The chain runs to 393 residues: Digeranylgeranylglycerophospholipid reductase 2 (393 aa).

FAD-binding residues include D33, C44, A45, G47, R100, A124, D280, G292, and I293.

The protein belongs to the geranylgeranyl reductase family. DGGGPL reductase subfamily. FAD serves as cofactor.

It carries out the reaction a 2,3-bis-O-phytanyl-sn-glycerol 1-phospholipid + 8 A = a 2,3-bis-O-(geranylgeranyl)-sn-glycerol 1-phospholipid + 8 AH2. The enzyme catalyses 2,3-bis-O-(phytanyl)-sn-glycerol 1-phosphate + 8 A = 2,3-bis-O-(geranylgeranyl)-sn-glycerol 1-phosphate + 8 AH2. The catalysed reaction is CDP-2,3-bis-O-(geranylgeranyl)-sn-glycerol + 8 AH2 = CDP-2,3-bis-O-(phytanyl)-sn-glycerol + 8 A. It catalyses the reaction archaetidylserine + 8 AH2 = 2,3-bis-O-phytanyl-sn-glycero-3-phospho-L-serine + 8 A. It participates in membrane lipid metabolism; glycerophospholipid metabolism. Functionally, is involved in the reduction of 2,3-digeranylgeranylglycerophospholipids (unsaturated archaeols) into 2,3-diphytanylglycerophospholipids (saturated archaeols) in the biosynthesis of archaeal membrane lipids. Catalyzes the formation of archaetidic acid (2,3-di-O-phytanyl-sn-glyceryl phosphate) from 2,3-di-O-geranylgeranylglyceryl phosphate (DGGGP) via the hydrogenation of each double bond of the isoprenoid chains. Is also probably able to reduce double bonds of geranyl groups in CDP-2,3-bis-O-(geranylgeranyl)-sn-glycerol and archaetidylserine, thus acting at various stages in the biosynthesis of archaeal membrane lipids. The protein is Digeranylgeranylglycerophospholipid reductase 2 of Methanosphaera stadtmanae (strain ATCC 43021 / DSM 3091 / JCM 11832 / MCB-3).